Here is a 331-residue protein sequence, read N- to C-terminus: Adenosine deaminase (331 aa).

The Zn(2+) site is built by histidine 12 and histidine 14. The substrate site is built by histidine 14, aspartate 16, and glycine 170. Histidine 197 serves as a coordination point for Zn(2+). The Proton donor role is filled by glutamate 200. A Zn(2+)-binding site is contributed by aspartate 278. Aspartate 279 provides a ligand contact to substrate.

It belongs to the metallo-dependent hydrolases superfamily. Adenosine and AMP deaminases family. Adenosine deaminase subfamily. The cofactor is Zn(2+).

The catalysed reaction is adenosine + H2O + H(+) = inosine + NH4(+). It carries out the reaction 2'-deoxyadenosine + H2O + H(+) = 2'-deoxyinosine + NH4(+). Catalyzes the hydrolytic deamination of adenosine and 2-deoxyadenosine. This is Adenosine deaminase from Shewanella loihica (strain ATCC BAA-1088 / PV-4).